The chain runs to 363 residues: Trans-2,3-enoyl-CoA reductase-like (363 aa).

S37 carries the phosphoserine modification. 3 helical membrane-spanning segments follow: residues 143–163 (WTTVFLAEYTGPLLIYLLFYL), 217–237 (LIMSCAFYWGFTSWIAYYINH), and 311–331 (ISFTVMTQTLPVGIFTLLMSI).

This sequence belongs to the steroid 5-alpha reductase family. As to expression, predominantly expressed in the heart and skeletal muscle.

The protein resides in the membrane. It is found in the endoplasmic reticulum. The protein is Trans-2,3-enoyl-CoA reductase-like (TECRL) of Homo sapiens (Human).